A 356-amino-acid polypeptide reads, in one-letter code: Phosphate acyltransferase (356 aa).

Belongs to the PlsX family. Homodimer. Probably interacts with PlsY.

It is found in the cytoplasm. The enzyme catalyses a fatty acyl-[ACP] + phosphate = an acyl phosphate + holo-[ACP]. It functions in the pathway lipid metabolism; phospholipid metabolism. Its function is as follows. Catalyzes the reversible formation of acyl-phosphate (acyl-PO(4)) from acyl-[acyl-carrier-protein] (acyl-ACP). This enzyme utilizes acyl-ACP as fatty acyl donor, but not acyl-CoA. The sequence is that of Phosphate acyltransferase from Xanthobacter autotrophicus (strain ATCC BAA-1158 / Py2).